Reading from the N-terminus, the 353-residue chain is ATPase GET3A (353 aa).

27-34 is a binding site for ATP; the sequence is KGGVGKTT. D56 is a catalytic residue. Residues E226 and N253 each coordinate ATP. Positions 320 to 353 form a coiled coil; the sequence is TTSRSNVEELERKVHTLRLQLKTAEEELERVKSG.

This sequence belongs to the arsA ATPase family. Homodimer. Interacts with GET1 and GET4.

It localises to the cytoplasm. Its subcellular location is the cytosol. The protein localises to the endoplasmic reticulum. It carries out the reaction ATP + H2O = ADP + phosphate + H(+). Functionally, ATPase required for the post-translational delivery of tail-anchored (TA) proteins to the endoplasmic reticulum. Recognizes and selectively binds the transmembrane domain of TA proteins in the cytosol. This complex then targets to the endoplasmic reticulum by membrane-bound receptors, where the tail-anchored protein is released for insertion. This process is regulated by ATP binding and hydrolysis. ATP binding drives the homodimer towards the closed dimer state, facilitating recognition of newly synthesized TA membrane proteins. ATP hydrolysis is required for insertion. Subsequently, the homodimer reverts towards the open dimer state, lowering its affinity for the membrane-bound receptor, and returning it to the cytosol to initiate a new round of targeting. Involved in the control of root hair growth through the regulation of syntaxin SYP123 expression. The polypeptide is ATPase GET3A (Arabidopsis thaliana (Mouse-ear cress)).